The following is a 562-amino-acid chain: Urocanate hydratase (562 aa).

NAD(+) is bound by residues 53 to 54 (GG), Gln131, 177 to 179 (GMG), Glu197, Arg202, 243 to 244 (NA), 268 to 272 (QTSAH), 278 to 279 (YL), and Tyr327. The active site involves Cys415. Gly497 serves as a coordination point for NAD(+).

The protein belongs to the urocanase family. Requires NAD(+) as cofactor.

The protein localises to the cytoplasm. The catalysed reaction is 4-imidazolone-5-propanoate = trans-urocanate + H2O. It participates in amino-acid degradation; L-histidine degradation into L-glutamate; N-formimidoyl-L-glutamate from L-histidine: step 2/3. In terms of biological role, catalyzes the conversion of urocanate to 4-imidazolone-5-propionate. The protein is Urocanate hydratase of Chelativorans sp. (strain BNC1).